Reading from the N-terminus, the 367-residue chain is MITYETRVKIDELREKYLNFVKLIDPDKLNMELKKMESEMSDPEIWKDQRKAGEISKKVRRIKELLSDISEIERNFEDIDVGIELSEEDPGIAQDIEKIVQEVEKNIRRFQLELILNDPLDQNNAYLSIHPGAGGTESHDWAQMLLRMYMRWAERKGFIVELLDFQPGEEAGLKSATILVKGEYAYGYLKHERGVHRLVRISPFDAAKRRHTSFASVNVVPEISDDIDVEIKPEDIRIDTFRASGHGGQYVNRTDSAVRITHLPTGIVVSCQSERSQHQNKALAMKVLKAKLYQLELAKRREQLDEIQGELKEISWGNQIRSYILQPYTLVKDHRTDIETGNFDAVLDGELDQFIEAELLYFADYKI.

An N5-methylglutamine modification is found at glutamine 249.

The protein belongs to the prokaryotic/mitochondrial release factor family. In terms of processing, methylated by PrmC. Methylation increases the termination efficiency of RF2.

Its subcellular location is the cytoplasm. Functionally, peptide chain release factor 2 directs the termination of translation in response to the peptide chain termination codons UGA and UAA. The sequence is that of Peptide chain release factor 2 from Pseudothermotoga lettingae (strain ATCC BAA-301 / DSM 14385 / NBRC 107922 / TMO) (Thermotoga lettingae).